The chain runs to 57 residues: Potassium channel toxin alpha-KTx 8.2 (57 aa).

The signal sequence occupies residues 1–28; the sequence is MSRLYAIILIALVFNVVMTITPDMKVEA. Intrachain disulfides connect Cys-31–Cys-47, Cys-34–Cys-52, and Cys-38–Cys-54.

The protein belongs to the short scorpion toxin superfamily. Potassium channel inhibitor family. Alpha-KTx 08 subfamily. In terms of tissue distribution, expressed by the venom gland.

Its subcellular location is the secreted. This toxin inhibits rKv1.1/KCNA1 (100% inhibition at 3 uM), Kv1.3/KCNA3 (human, mouse and rat) (IC(50)=269-467 nM), shaker IR (60% at 3 uM) and activates the mouse capsaicin receptor TRPV1 (EC(50)=132 uM, at 20 degrees Celsius), a non-selective cation channel expressed by sensory neurons of the pain pathway. In vivo, intraplantar injection of this toxin in WT mice hind paw shows significant acute pain, whereas no pain is observed when the toxin is injected into TRPV1 KO mice. In addition, subcutaneous injection into mice (185 mg) produces an excitation of the animal, but no lethality, whereas injection into cockroaches does not provoke lethality as well. The protein is Potassium channel toxin alpha-KTx 8.2 of Olivierus martensii (Manchurian scorpion).